The following is a 141-amino-acid chain: uncharacterized protein (141 aa).

This is an uncharacterized protein from Homo sapiens (Human).